Reading from the N-terminus, the 498-residue chain is Protein adenylyltransferase Fic (498 aa).

A helical membrane pass occupies residues 43-63 (FAFLAFLAGSFLAFSLHALIS). 2 TPR repeats span residues 126–159 (ALSSLRLAQDMYMAGKDDKAARLFEHALALAPRH) and 160–194 (PEVLLRYGEFLEHNQRNIVLADQYYFQALTINPSH). Residues 251 to 256 (SVGIEG) carry the Inhibitory (S/T)XXXE(G/N) motif motif. ATP contacts are provided by residues Glu-255 and 336 to 339 (VGGH). In terms of domain architecture, Fido spans 305-440 (ITIKDILELH…IRPFVRFIAD (136 aa)). The active site involves His-383. Residues 387–394 (DGNGRTSR), 419–420 (YY), and Asn-427 each bind ATP.

This sequence belongs to the fic family. In terms of assembly, homodimer.

It localises to the membrane. The enzyme catalyses L-tyrosyl-[protein] + ATP = O-(5'-adenylyl)-L-tyrosyl-[protein] + diphosphate. It catalyses the reaction L-threonyl-[protein] + ATP = 3-O-(5'-adenylyl)-L-threonyl-[protein] + diphosphate. The catalysed reaction is 3-O-(5'-adenylyl)-L-threonyl-[protein] + H2O = L-threonyl-[protein] + AMP + H(+). With respect to regulation, the side chain of Glu-255 determines which of the two opposing activities (AMPylase or de-AMPylase) will take place. In response to endoplasmic reticulum stress, mediates de-AMPylase activity. Adenylyltransferase activity is inhibited by the inhibitory helix present at the N-terminus: Glu-255 binds ATP and competes with ATP-binding at Arg-394, thereby preventing adenylyltransferase activity. In unstressed cells, disengagement of Glu-255 promotes adenylyltransferase activity. Activation dissociates ATP-binding from Glu-255, allowing ordered binding of the entire ATP moiety with the alpha-phosphate in an orientation that is productive for accepting an incoming target hydroxyl side chain. Functionally, protein that can both mediate the addition of adenosine 5'-monophosphate (AMP) to specific residues of target proteins (AMPylation), and the removal of the same modification from target proteins (de-AMPylation), depending on the context. The side chain of Glu-255 determines which of the two opposing activities (AMPylase or de-AMPylase) will take place. Acts as a key regulator of the unfolded protein response (UPR) by mediating AMPylation or de-AMPylation of Hsc70-3/BiP. In unstressed cells, acts as an adenylyltransferase by mediating AMPylation of Hsc70-3/BiP at 'Thr-518', thereby inactivating it. In response to endoplasmic reticulum stress, acts as a phosphodiesterase by mediating removal of ATP (de-AMPylation) from Hsc70-3/BiP at 'Thr-518', leading to restore HSPA5/BiP activity. The sequence is that of Protein adenylyltransferase Fic from Drosophila willistoni (Fruit fly).